Reading from the N-terminus, the 454-residue chain is Inner membrane permease YgbN (454 aa).

Residue methionine 1 is a topological domain, periplasmic. The chain crosses the membrane as a helical span at residues 2 to 22 (STITLLCIALAGVIMLLLLVI). The Cytoplasmic segment spans residues 23–27 (KAKVQ). The chain crosses the membrane as a helical span at residues 28-48 (PFVALLLVSLLVALAAGIPAG). Over 49–52 (EVGK) the chain is Periplasmic. A helical transmembrane segment spans residues 53-73 (VMIAGMGGVLGSVTIIIGLGA). The Cytoplasmic portion of the chain corresponds to 74–108 (MLGRMIEHSGGAESLANYFSRKLGDKRTIAALTLA). The chain crosses the membrane as a helical span at residues 109-129 (AFFLGIPVFFDVGFIILAPII). At 130 to 137 (YGFAKVAK) the chain is on the periplasmic side. A helical transmembrane segment spans residues 138 to 158 (ISPLKFGLPVAGIMLTVHVAV). Over 159–174 (PPHPGPVAAAGLLHAD) the chain is Cytoplasmic. Residues 175–195 (IGWLTIIGIAISIPVGVVGYF) traverse the membrane as a helical segment. Residues 196–235 (AAKIINKRQYAMSVEVLEQMQLAPASEEGATKLSDKINPP) are Periplasmic-facing. Residues 236 to 256 (GVALVTSLIVIPIAIIMAGTV) traverse the membrane as a helical segment. Residues 257–273 (SATLMPPSHPLLGTLQL) lie on the Cytoplasmic side of the membrane. A helical transmembrane segment spans residues 274 to 294 (IGSPMVALMIALVLAFWLLAL). Residues 295 to 305 (RRGWSLQHTSD) are Periplasmic-facing. The chain crosses the membrane as a helical span at residues 306–326 (IMGSALPTAAVVILVTGAGGV). The Cytoplasmic segment spans residues 327-341 (FGKVLVESGVGKALA). Residues 342 to 362 (NMLQMIDLPLLPAAFIISLAL) form a helical membrane-spanning segment. The Periplasmic segment spans residues 363–383 (RASQGSATVAILTTGGLLSEA). Residues 384-404 (VMGLNPIQCVLVTLAACFGGL) form a helical membrane-spanning segment. Residues 405–433 (GASHINDSGFWIVTKYLGLSVADGLKTWT) lie on the Cytoplasmic side of the membrane. Residues 434-454 (VLTTILGFTGFLITWCVWAVI) form a helical membrane-spanning segment.

The protein belongs to the GntP permease family.

Its subcellular location is the cell inner membrane. This is Inner membrane permease YgbN (ygbN) from Escherichia coli (strain K12).